A 378-amino-acid chain; its full sequence is Succinyl-diaminopimelate desuccinylase 2 (378 aa).

Residue His-68 coordinates Zn(2+). Asp-70 is an active-site residue. Zn(2+) is bound at residue Asp-101. Catalysis depends on Glu-135, which acts as the Proton acceptor. 3 residues coordinate Zn(2+): Glu-136, Glu-164, and His-350.

This sequence belongs to the peptidase M20A family. DapE subfamily. Homodimer. Requires Zn(2+) as cofactor. Co(2+) is required as a cofactor.

The catalysed reaction is N-succinyl-(2S,6S)-2,6-diaminopimelate + H2O = (2S,6S)-2,6-diaminopimelate + succinate. It participates in amino-acid biosynthesis; L-lysine biosynthesis via DAP pathway; LL-2,6-diaminopimelate from (S)-tetrahydrodipicolinate (succinylase route): step 3/3. Functionally, catalyzes the hydrolysis of N-succinyl-L,L-diaminopimelic acid (SDAP), forming succinate and LL-2,6-diaminopimelate (DAP), an intermediate involved in the bacterial biosynthesis of lysine and meso-diaminopimelic acid, an essential component of bacterial cell walls. In Alteromonas mediterranea (strain DSM 17117 / CIP 110805 / LMG 28347 / Deep ecotype), this protein is Succinyl-diaminopimelate desuccinylase 2.